We begin with the raw amino-acid sequence, 788 residues long: MGIELLCLFFLFLGRNDHVQGGCALGGAETCEDCLLIGPQCAWCAQENFTHPSGVGERCDTPANLLAKGCQLNFIENPVSQVEILKNKPLSVGRQKNSSDIVQIAPQSLILKLRPGGAQTLQVHVRQTEDYPVDLYYLMDLSASMDDDLNTIKELGSRLSKEMSKLTSNFRLGFGSFVEKPVSPFVKTTPEEIANPCSSIPYFCLPTFGFKHILPLTNDAERFNEIVKNQKISANIDTPEGGFDAIMQAAVCKEKIGWRNDSLHLLVFVSDADSHFGMDSKLAGIVIPNDGLCHLDSKNEYSMSTVLEYPTIGQLIDKLVQNNVLLIFAVTQEQVHLYENYAKLIPGATVGLLQKDSGNILQLIISAYEELRSEVELEVLGDTEGLNLSFTAICNNGTLFQHQKKCSHMKVGDTASFSVTVNIPHCERRSRHIIIKPVGLGDALELLVSPECNCDCQKEVEVNSSKCHHGNGSFQCGVCACHPGHMGPRCECGEDMLSTDSCKEAPDHPSCSGRGDCYCGQCICHLSPYGNIYGPYCQCDNFSCVRHKGLLCGGNGDCDCGECVCRSGWTGEYCNCTTSTDSCVSEDGVLCSGRGDCVCGKCVCTNPGASGPTCERCPTCGDPCNSKRSCIECHLSAAGQAREECVDKCKLAGATISEEEDFSKDGSVSCSLQGENECLITFLITTDNEGKTIIHSINEKDCPKPPNIPMIMLGVSLAILLIGVVLLCIWKLLVSFHDRKEVAKFEAERSKAKWQTGTNPLYRGSTSTFKNVTYKHREKQKVDLSTDC.

The first 21 residues, 1–21 (MGIELLCLFFLFLGRNDHVQG), serve as a signal peptide directing secretion. The region spanning 22-71 (GCALGGAETCEDCLLIGPQCAWCAQENFTHPSGVGERCDTPANLLAKGCQ) is the PSI domain. Residues 22-709 (GCALGGAETC…KDCPKPPNIP (688 aa)) lie on the Extracellular side of the membrane. 19 cysteine pairs are disulfide-bonded: Cys-23/Cys-41, Cys-31/Cys-454, Cys-34/Cys-59, Cys-44/Cys-70, Cys-197/Cys-204, Cys-252/Cys-293, Cys-394/Cys-406, Cys-426/Cys-452, Cys-456/Cys-476, Cys-467/Cys-479, Cys-481/Cys-490, Cys-492/Cys-519, Cys-502/Cys-517, Cys-511/Cys-522, Cys-524/Cys-537, Cys-539/Cys-560, Cys-544/Cys-558, Cys-552/Cys-563, and Cys-565/Cys-574. Residues Asn-48 and Asn-97 are each glycosylated (N-linked (GlcNAc...) asparagine). In terms of domain architecture, VWFA spans 131-371 (YPVDLYYLMD…QLIISAYEEL (241 aa)). Asp-140, Ser-142, and Ser-144 together coordinate Mg(2+). The Ca(2+) site is built by Ser-144, Asp-147, Asp-148, and Glu-179. Ca(2+) contacts are provided by Asn-235, Asp-237, Pro-239, and Glu-240. A Mg(2+)-binding site is contributed by Glu-240. The N-linked (GlcNAc...) asparagine glycan is linked to Asn-260. 2 residues coordinate Ca(2+): Asp-271 and Lys-355. N-linked (GlcNAc...) asparagine glycosylation is found at Asn-387 and Asn-396. 4 consecutive I-EGF domains span residues 456–491 (CQKEVEVNSSKCHHGNGSFQCGVCACHPGHMGPRCE), 492–538 (CGED…PYCQ), 539–575 (CDNFSCVRHKGLLCGGNGDCDCGECVCRSGWTGEYCN), and 576–615 (CTTSTDSCVSEDGVLCSGRGDCVCGKCVCTNPGASGPTCE). Asn-463 and Asn-471 each carry an N-linked (GlcNAc...) asparagine glycan. The N-linked (GlcNAc...) asparagine glycan is linked to Asn-541. Asn-575 carries an N-linked (GlcNAc...) asparagine glycan. Intrachain disulfides connect Cys-576-Cys-599, Cys-583-Cys-597, Cys-591-Cys-602, Cys-604-Cys-614, Cys-617-Cys-620, Cys-624-Cys-670, Cys-630-Cys-649, Cys-633-Cys-645, and Cys-678-Cys-702. The helical transmembrane segment at 710-730 (MIMLGVSLAILLIGVVLLCIW) threads the bilayer. Residues 731–758 (KLLVSFHDRKEVAKFEAERSKAKWQTGT) form an interaction with HAX1 region. Residues 731 to 788 (KLLVSFHDRKEVAKFEAERSKAKWQTGTNPLYRGSTSTFKNVTYKHREKQKVDLSTDC) are Cytoplasmic-facing.

This sequence belongs to the integrin beta chain family. Heterodimer of an alpha and a beta subunit. Interacts with FLNB. Interacts with HAX1. ITGAV:ITGB6 interacts with FBN1. ITGAV:ITGB6 interacts with TGFB1. As to quaternary structure, (Microbial infection) Integrin ITGAV:ITGB6 interacts with coxsackievirus A9, coxsackievirus B1 capsid proteins. In terms of assembly, (Microbial infection) Integrin ITGAV:ITGB6 interacts with herpes simplex virus-1/HHV-1 gH:gL proteins.

The protein localises to the cell membrane. The protein resides in the cell junction. It is found in the focal adhesion. Its function is as follows. Integrin alpha-V:beta-6 (ITGAV:ITGB6) is a receptor for fibronectin and cytotactin. It recognizes the sequence R-G-D in its ligands. Internalization of integrin alpha-V/beta-6 via clathrin-mediated endocytosis promotes carcinoma cell invasion. ITGAV:ITGB6 acts as a receptor for fibrillin-1 (FBN1) and mediates R-G-D-dependent cell adhesion to FBN1. Integrin alpha-V:beta-6 (ITGAV:ITGB6) mediates R-G-D-dependent release of transforming growth factor beta-1 (TGF-beta-1) from regulatory Latency-associated peptide (LAP), thereby playing a key role in TGF-beta-1 activation. Functionally, (Microbial infection) Integrin ITGAV:ITGB6 acts as a receptor for Coxsackievirus A9 and Coxsackievirus B1. In terms of biological role, (Microbial infection) Integrin ITGAV:ITGB6 acts as a receptor for Herpes simplex virus-1/HHV-1. The chain is Integrin beta-6 (ITGB6) from Homo sapiens (Human).